The following is a 566-amino-acid chain: Arginine--tRNA ligase (566 aa).

Residues 129-139 carry the 'HIGH' region motif; it reads ANPTGPLHIGH.

This sequence belongs to the class-I aminoacyl-tRNA synthetase family. In terms of assembly, monomer.

It is found in the cytoplasm. It carries out the reaction tRNA(Arg) + L-arginine + ATP = L-arginyl-tRNA(Arg) + AMP + diphosphate. In Wolbachia pipientis subsp. Culex pipiens (strain wPip), this protein is Arginine--tRNA ligase.